The primary structure comprises 468 residues: Trehalose-binding lipoprotein LpqY (468 aa).

An N-terminal signal peptide occupies residues 1 to 25 (MVMSRGRIPRLGAAVLVALTTAAAA). Cysteine 26 carries N-palmitoyl cysteine lipidation. The S-diacylglycerol cysteine moiety is linked to residue cysteine 26. Cysteines 54 and 372 form a disulfide. 6 residues coordinate alpha,alpha-trehalose: aspartate 97, asparagine 151, tryptophan 276, phenylalanine 278, glycine 351, and arginine 421.

The protein belongs to the bacterial solute-binding protein 1 family. As to quaternary structure, monomer. The complex is composed of two ATP-binding proteins (SugC), two transmembrane proteins (SugA and SugB) and a solute-binding protein (LpqY).

It localises to the cell inner membrane. Its function is as follows. Part of the ABC transporter complex LpqY-SugA-SugB-SugC, which is highly specific for uptake of trehalose. Involved in the recycling of extracellular trehalose released from trehalose-containing molecules synthesized by M.tuberculosis. Trehalose uptake is essential for virulence. The chain is Trehalose-binding lipoprotein LpqY (lpqY) from Mycobacterium tuberculosis (strain CDC 1551 / Oshkosh).